Reading from the N-terminus, the 590-residue chain is FAD-linked oxidoreductase malF (590 aa).

An N-terminal signal peptide occupies residues 1–18 (MKYTATFALLILAIGIQT). N-linked (GlcNAc...) asparagine glycosylation is found at asparagine 44, asparagine 80, asparagine 103, asparagine 178, and asparagine 396. In terms of domain architecture, FAD-binding PCMH-type spans 117–303 (AQGRIPLYSA…TSVTLRAFAD (187 aa)).

This sequence belongs to the oxygen-dependent FAD-linked oxidoreductase family. FAD is required as a cofactor.

Its function is as follows. FAD-linked oxidoreductase; part of the gene cluster that mediates the biosynthesis of malbrancheamide, a dichlorinated fungal indole alkaloid that belongs to a family of natural products containing a characteristic bicyclo[2.2.2]diazaoctane core. The first step of malbrancheamide biosynthesis involves coupling of L-proline and L-tryptophan by malG, a bimodular NRPS, to produce L-Pro-L-Trp aldehyde through reductive offloading. This compound undergoes spontaneous cyclization and dehydration to give a dienamine which is reverse prenylated at C-2 by malE. The other prenyltransferase present in the cluster, malB, displays modest activity, suggesting that may be a redundant gene in the pathway. Subsequently, a [4+2] Diels-Alder cyclo-addition catalyzed by the bifunctional enzyme malC forms the characteristic bicyclo[2.2.2]diazaoctane ring of premalbrancheamid. Finally, the flavin-dependent halogenase malA catalyzes the iterative dichlorination of the indole ring of premalbrancheamide to yield C-9 monochlorinated malbrancheamide B, C-8 monochlorinated isomalbrancheamide B, and dichlorinated malbrancheamide. MalA is also able to brominate premalbrancheamide at C-9 to yield malbrancheamide C, and, to a lesser extend, at C-8 to yield isomalbrancheamide C. Finally, malA can brominate C-9 monochlorinated malbrancheamide B at C-8 to yield malbrancheamide D, or C-8 monochlorinated isomalbrancheamide B at C-9 to produce isomalbrancheamide D. This is FAD-linked oxidoreductase malF from Malbranchea aurantiaca.